Consider the following 490-residue polypeptide: Ketol-acid reductoisomerase (NADP(+)) (490 aa).

The 194-residue stretch at 15 to 208 (INLQKCKLID…GSHHAGILHS (194 aa)) folds into the KARI N-terminal Rossmann domain. Residues 45–48 (CGSQ), Arg68, Ser78, and 108–110 (DKQ) each bind NADP(+). Residue His132 is part of the active site. An NADP(+)-binding site is contributed by Gly158. 2 consecutive KARI C-terminal knotted domains span residues 209–344 (SFIA…KCNI) and 345–484 (YYKQ…MTSM). Residues Asp217, Glu221, Glu389, and Glu393 each contribute to the Mg(2+) site. Residue Ser414 participates in substrate binding.

Belongs to the ketol-acid reductoisomerase family. The cofactor is Mg(2+).

The enzyme catalyses (2R)-2,3-dihydroxy-3-methylbutanoate + NADP(+) = (2S)-2-acetolactate + NADPH + H(+). The catalysed reaction is (2R,3R)-2,3-dihydroxy-3-methylpentanoate + NADP(+) = (S)-2-ethyl-2-hydroxy-3-oxobutanoate + NADPH + H(+). It functions in the pathway amino-acid biosynthesis; L-isoleucine biosynthesis; L-isoleucine from 2-oxobutanoate: step 2/4. It participates in amino-acid biosynthesis; L-valine biosynthesis; L-valine from pyruvate: step 2/4. Functionally, involved in the biosynthesis of branched-chain amino acids (BCAA). Catalyzes an alkyl-migration followed by a ketol-acid reduction of (S)-2-acetolactate (S2AL) to yield (R)-2,3-dihydroxy-isovalerate. In the isomerase reaction, S2AL is rearranged via a Mg-dependent methyl migration to produce 3-hydroxy-3-methyl-2-ketobutyrate (HMKB). In the reductase reaction, this 2-ketoacid undergoes a metal-dependent reduction by NADPH to yield (R)-2,3-dihydroxy-isovalerate. The sequence is that of Ketol-acid reductoisomerase (NADP(+)) from Buchnera aphidicola subsp. Melaphis rhois.